The following is a 429-amino-acid chain: MSHRRMQLALSLVFILCGLFNSIFCEKQQHSQQHANLVLLKKISAFSQKMEAHPKAFAQELFKALIAENPKKNIIFSPAAMTITLATLSLGIKSTMSTNHPEDLELELKLLDAHKCLHHLVHLGRELVKQKQLRHQDILFLNSKMMANQMLLHQIRKLQKMDIQMIDFSDTEKAKKAISHHVAEKTHTKIRDLITDLNPETILCLVNHIFFKGILKRAFQPNLTQKEDFFLNDKTKVQVDMMRKTEQMLYSRSEELFATMVKMPFKGNVSLILMLPDAGHFDNALKKLTAKRAKLQKISNFRLVHLTLPKFKITFDINFKHLLPKINLKHLLPKIDPKHTLTTTASSQHVTLKAPLPNLEALHQVEIELSEHALTTDTAIHTDNLLKVPANTKEVPVVVKFNRPFLLFVEDEITQTDLFVGQVLNPQVE.

The first 25 residues, 1 to 25, serve as a signal peptide directing secretion; that stretch reads MSHRRMQLALSLVFILCGLFNSIFC. N-linked (GlcNAc...) asparagine glycans are attached at residues asparagine 222 and asparagine 268.

It belongs to the serpin family. UTMP subfamily. Glycosylated; carries the so-called mannose 6-phosphate lysosomal recognition marker on its carbohydrate chains. In terms of tissue distribution, secreted by ovine endometrium under the influence of progesterone.

The sequence is that of Uterine milk protein from Ovis aries (Sheep).